We begin with the raw amino-acid sequence, 481 residues long: ATP synthase subunit beta, chloroplastic (481 aa).

An ATP-binding site is contributed by 162–169 (GGAGVGKT).

This sequence belongs to the ATPase alpha/beta chains family. F-type ATPases have 2 components, F(1) - the catalytic core - and F(0) - the membrane proton channel. F(1) has five subunits: alpha(3), beta(3), gamma(1), delta(1), epsilon(1). F(0) has four main subunits: a(1), b(1), b'(1) and c(10-14). The alpha and beta chains form an alternating ring which encloses part of the gamma chain. F(1) is attached to F(0) by a central stalk formed by the gamma and epsilon chains, while a peripheral stalk is formed by the delta, b and b' chains.

The protein localises to the plastid. It is found in the chloroplast thylakoid membrane. The catalysed reaction is ATP + H2O + 4 H(+)(in) = ADP + phosphate + 5 H(+)(out). F(1)F(0) ATP synthase produces ATP from ADP in the presence of a proton or sodium gradient. F-type ATPases consist of two structural domains, F(1) containing the extramembraneous catalytic core and F(0) containing the membrane proton channel, linked together by a central stalk and a peripheral stalk. During catalysis, ATP synthesis in the catalytic domain of F(1) is coupled via a rotary mechanism of the central stalk subunits to proton translocation. Functionally, produces ATP from ADP in the presence of a proton gradient across the membrane. The catalytic sites are hosted primarily by the beta subunits. The polypeptide is ATP synthase subunit beta, chloroplastic (Chlamydomonas reinhardtii (Chlamydomonas smithii)).